We begin with the raw amino-acid sequence, 475 residues long: Chromosomal replication initiator protein DnaA (475 aa).

The segment at 1-71 (MTNDTWNEVR…RQLSAHGAGA (71 aa)) is domain I, interacts with DnaA modulators. The segment at 71–133 (ADRVKFTVSP…PAQPRELPGA (63 aa)) is domain II. The segment covering 107–127 (APAPVHHTAPAPAPVAAPAQP) has biased composition (low complexity). The tract at residues 107–129 (APAPVHHTAPAPAPVAAPAQPRE) is disordered. Residues 134–355 (KLNPNFTFAN…GALTRLFAFA (222 aa)) are domain III, AAA+ region. Gly-178, Gly-180, Lys-181, and Thr-182 together coordinate ATP. The tract at residues 356-475 (DLVRREVTVD…AELLRRTLEA (120 aa)) is domain IV, binds dsDNA.

The protein belongs to the DnaA family. As to quaternary structure, oligomerizes as a right-handed, spiral filament on DNA at oriC.

Its subcellular location is the cytoplasm. Functionally, plays an essential role in the initiation and regulation of chromosomal replication. ATP-DnaA binds to the origin of replication (oriC) to initiate formation of the DNA replication initiation complex once per cell cycle. Binds the DnaA box (a 9 base pair repeat at the origin) and separates the double-stranded (ds)DNA. Forms a right-handed helical filament on oriC DNA; dsDNA binds to the exterior of the filament while single-stranded (ss)DNA is stabiized in the filament's interior. The ATP-DnaA-oriC complex binds and stabilizes one strand of the AT-rich DNA unwinding element (DUE), permitting loading of DNA polymerase. After initiation quickly degrades to an ADP-DnaA complex that is not apt for DNA replication. Binds acidic phospholipids. The sequence is that of Chromosomal replication initiator protein DnaA from Jannaschia sp. (strain CCS1).